A 616-amino-acid polypeptide reads, in one-letter code: Chaperone protein HscA (616 aa).

Belongs to the heat shock protein 70 family.

Functionally, chaperone involved in the maturation of iron-sulfur cluster-containing proteins. Has a low intrinsic ATPase activity which is markedly stimulated by HscB. Involved in the maturation of IscU. The sequence is that of Chaperone protein HscA from Pectobacterium carotovorum subsp. carotovorum (strain PC1).